The sequence spans 544 residues: Probable protein kinase UbiB (544 aa).

The Protein kinase domain maps to 123–501 (EFDIKPLASA…KRQQATGKFL (379 aa)). ATP-binding positions include 129-137 (LASASIAQV) and Lys152. Residue Asp287 is the Proton acceptor of the active site. Helical transmembrane passes span 496 to 516 (ATGK…AILV) and 519 to 539 (AYEQ…LLSW).

Belongs to the ABC1 family. UbiB subfamily.

The protein resides in the cell inner membrane. Its pathway is cofactor biosynthesis; ubiquinone biosynthesis [regulation]. Its function is as follows. Is probably a protein kinase regulator of UbiI activity which is involved in aerobic coenzyme Q (ubiquinone) biosynthesis. This chain is Probable protein kinase UbiB, found in Vibrio parahaemolyticus serotype O3:K6 (strain RIMD 2210633).